Consider the following 243-residue polypeptide: tRNA (guanine-N(1)-)-methyltransferase (243 aa).

S-adenosyl-L-methionine contacts are provided by residues glycine 111 and 130-135; that span reads IGDYVL.

The protein belongs to the RNA methyltransferase TrmD family. In terms of assembly, homodimer.

Its subcellular location is the cytoplasm. The catalysed reaction is guanosine(37) in tRNA + S-adenosyl-L-methionine = N(1)-methylguanosine(37) in tRNA + S-adenosyl-L-homocysteine + H(+). Specifically methylates guanosine-37 in various tRNAs. This Acholeplasma laidlawii (strain PG-8A) protein is tRNA (guanine-N(1)-)-methyltransferase.